A 901-amino-acid chain; its full sequence is Alanine--tRNA ligase (901 aa).

Zn(2+) is bound by residues H581, H585, C684, and H688.

Belongs to the class-II aminoacyl-tRNA synthetase family. The cofactor is Zn(2+).

It is found in the cytoplasm. It catalyses the reaction tRNA(Ala) + L-alanine + ATP = L-alanyl-tRNA(Ala) + AMP + diphosphate. Functionally, catalyzes the attachment of alanine to tRNA(Ala) in a two-step reaction: alanine is first activated by ATP to form Ala-AMP and then transferred to the acceptor end of tRNA(Ala). Also edits incorrectly charged Ser-tRNA(Ala) and Gly-tRNA(Ala) via its editing domain. The sequence is that of Alanine--tRNA ligase from Mycobacterium ulcerans (strain Agy99).